Consider the following 189-residue polypeptide: Large ribosomal subunit protein bL12c (189 aa).

Disordered stretches follow at residues 1–30 (MAAT…HPQP) and 165–189 (EGVS…VSIV). Residues 1–56 (MAATTTMATLNLPSLTSHPNSSTFPKHPQPLQFPFRTTTNPISLSSTRTTRLRPIA) constitute a chloroplast transit peptide. Polar residues predominate over residues 11–24 (NLPSLTSHPNSSTF). Basic and acidic residues predominate over residues 165–183 (EGVSKDDAEDAKKQLEDAG).

As to quaternary structure, component of the chloroplast large ribosomal subunit (LSU). Mature 70S chloroplast ribosomes of higher plants consist of a small (30S) and a large (50S) subunit. The 30S small subunit contains 1 molecule of ribosomal RNA (16S rRNA) and 24 different proteins. The 50S large subunit contains 3 rRNA molecules (23S, 5S and 4.5S rRNA) and 33 different proteins.

It localises to the plastid. The protein localises to the chloroplast. In terms of biological role, component of the chloroplast ribosome (chloro-ribosome), a dedicated translation machinery responsible for the synthesis of chloroplast genome-encoded proteins, including proteins of the transcription and translation machinery and components of the photosynthetic apparatus. This chain is Large ribosomal subunit protein bL12c (RPL12), found in Spinacia oleracea (Spinach).